The sequence spans 165 residues: Small ribosomal subunit protein uS13 (165 aa).

The disordered stretch occupies residues 139 to 165 (GMTIGVARKKAAQPQSQQSSSQQQKSS). Low complexity predominate over residues 153–165 (QSQQSSSQQQKSS).

This sequence belongs to the universal ribosomal protein uS13 family. In terms of assembly, part of the 30S ribosomal subunit. Forms a loose heterodimer with protein S19. Forms two bridges to the 50S subunit in the 70S ribosome.

In terms of biological role, located at the top of the head of the 30S subunit, it contacts several helices of the 16S rRNA. In the 70S ribosome it contacts the 23S rRNA (bridge B1a) and protein L5 of the 50S subunit (bridge B1b), connecting the 2 subunits; these bridges are implicated in subunit movement. This chain is Small ribosomal subunit protein uS13, found in Saccharolobus solfataricus (strain ATCC 35092 / DSM 1617 / JCM 11322 / P2) (Sulfolobus solfataricus).